The chain runs to 715 residues: Zinc finger protein 544 (715 aa).

The 72-residue stretch at 14–85 folds into the KRAB domain; that stretch reads VCFEDVAMAF…EQEAPRDWKA (72 aa). Residues Lys273 and Lys289 each participate in a glycyl lysine isopeptide (Lys-Gly) (interchain with G-Cter in SUMO2) cross-link. The C2H2-type 1; atypical zinc finger occupies 354 to 374; it reads SVCNQCGKSFSCCKLIHQRTH. C2H2-type zinc fingers lie at residues 380–402, 408–430, 436–458, 464–486, 492–514, 520–542, 548–570, 576–598, 604–626, 632–654, 660–682, and 688–710; these read FECTQCGKSFSQSYDLVIHQRTH, YECDLCGKSFTQRSKLITHQRIH, YQCIECRKSFRWNSNLIVHQRIH, YECTHCGKSFSQSYELVTHKRTH, FKCTQCGKSFSQKYDLVVHQRTH, YECNLCGKSFSQSSKLITHQRIH, YQCIECGKSFRWNSNLVIHQRIH, YDCTHCGKSFSQSYQLVAHKRTH, YECNECGKAFNRSTQLIRHLQIH, YKCNQCNKAFARSSYLVMHQRTH, FECSQCGKAFSGSSNLLSHHRIH, and YECSDCGKSFRQQSQLVVHRRTH. Residue Lys534 forms a Glycyl lysine isopeptide (Lys-Gly) (interchain with G-Cter in SUMO2) linkage.

It belongs to the krueppel C2H2-type zinc-finger protein family.

It localises to the nucleus. May be involved in transcriptional regulation. This Homo sapiens (Human) protein is Zinc finger protein 544 (ZNF544).